Here is a 476-residue protein sequence, read N- to C-terminus: Sulfate adenylyltransferase subunit 1 (476 aa).

A tr-type G domain is found at 24–239 (KSLLRFLTCG…LLETVDVDYE (216 aa)). A G1 region spans residues 33-40 (GSVDDGKS). 33–40 (GSVDDGKS) serves as a coordination point for GTP. Residues 91 to 95 (GITID) form a G2 region. The G3 stretch occupies residues 112 to 115 (DTPG). Residues 112–116 (DTPGH) and 167–170 (NKMD) contribute to the GTP site. The segment at 167-170 (NKMD) is G4. Residues 205-207 (SAL) are G5.

The protein belongs to the TRAFAC class translation factor GTPase superfamily. Classic translation factor GTPase family. CysN/NodQ subfamily. As to quaternary structure, heterodimer composed of CysD, the smaller subunit, and CysN.

It catalyses the reaction sulfate + ATP + H(+) = adenosine 5'-phosphosulfate + diphosphate. It functions in the pathway sulfur metabolism; hydrogen sulfide biosynthesis; sulfite from sulfate: step 1/3. With CysD forms the ATP sulfurylase (ATPS) that catalyzes the adenylation of sulfate producing adenosine 5'-phosphosulfate (APS) and diphosphate, the first enzymatic step in sulfur assimilation pathway. APS synthesis involves the formation of a high-energy phosphoric-sulfuric acid anhydride bond driven by GTP hydrolysis by CysN coupled to ATP hydrolysis by CysD. This Vibrio parahaemolyticus serotype O3:K6 (strain RIMD 2210633) protein is Sulfate adenylyltransferase subunit 1.